We begin with the raw amino-acid sequence, 205 residues long: Thymidine kinase (205 aa).

Residues 9–16 and 88–91 each bind ATP; these read SAMNAGKT and DECH. The Proton acceptor role is filled by Glu-89. Zn(2+)-binding residues include Cys-146, Cys-148, Cys-183, and His-186.

Belongs to the thymidine kinase family. In terms of assembly, homotetramer.

It is found in the cytoplasm. It carries out the reaction thymidine + ATP = dTMP + ADP + H(+). The protein is Thymidine kinase of Blochmanniella pennsylvanica (strain BPEN).